Consider the following 258-residue polypeptide: 14-3-3 protein 6 (258 aa).

The disordered stretch occupies residues 238–258 (DMQDDGTDEIKEATPKPDDNE). Over residues 245-258 (DEIKEATPKPDDNE) the composition is skewed to basic and acidic residues.

It belongs to the 14-3-3 family. In terms of assembly, homodimer.

The chain is 14-3-3 protein 6 (TFT6) from Solanum lycopersicum (Tomato).